Consider the following 103-residue polypeptide: Large ribosomal subunit protein bL21 (103 aa).

This sequence belongs to the bacterial ribosomal protein bL21 family. Part of the 50S ribosomal subunit. Contacts protein L20.

Functionally, this protein binds to 23S rRNA in the presence of protein L20. The polypeptide is Large ribosomal subunit protein bL21 (Actinobacillus succinogenes (strain ATCC 55618 / DSM 22257 / CCUG 43843 / 130Z)).